A 484-amino-acid chain; its full sequence is UDP-N-acetylmuramoyl-L-alanyl-D-glutamate--2,6-diaminopimelate ligase (484 aa).

110-116 (GTNGKTT) is an ATP binding site. UDP-N-acetyl-alpha-D-muramoyl-L-alanyl-D-glutamate contacts are provided by residues 152–153 (TT), serine 179, and arginine 187. The residue at position 219 (lysine 219) is an N6-carboxylysine. Meso-2,6-diaminopimelate-binding positions include arginine 381, 405–408 (DNPR), glycine 455, and glutamate 459. Residues 405–408 (DNPR) carry the Meso-diaminopimelate recognition motif motif.

Belongs to the MurCDEF family. MurE subfamily. Mg(2+) serves as cofactor. Post-translationally, carboxylation is probably crucial for Mg(2+) binding and, consequently, for the gamma-phosphate positioning of ATP.

Its subcellular location is the cytoplasm. It carries out the reaction UDP-N-acetyl-alpha-D-muramoyl-L-alanyl-D-glutamate + meso-2,6-diaminopimelate + ATP = UDP-N-acetyl-alpha-D-muramoyl-L-alanyl-gamma-D-glutamyl-meso-2,6-diaminopimelate + ADP + phosphate + H(+). It functions in the pathway cell wall biogenesis; peptidoglycan biosynthesis. In terms of biological role, catalyzes the addition of meso-diaminopimelic acid to the nucleotide precursor UDP-N-acetylmuramoyl-L-alanyl-D-glutamate (UMAG) in the biosynthesis of bacterial cell-wall peptidoglycan. The polypeptide is UDP-N-acetylmuramoyl-L-alanyl-D-glutamate--2,6-diaminopimelate ligase (Clostridium perfringens (strain 13 / Type A)).